The following is a 257-amino-acid chain: Dof zinc finger protein DOF5.3 (257 aa).

Positions 23 to 50 (LSYSSNPTPLDNDQKKPSPATAVTRPQP) are disordered. Polar residues predominate over residues 24 to 33 (SYSSNPTPLD). The segment at 55–109 (LRCPRCDSTNTKFCYYNNYSLTQPRYFCKSCRRYWTKGGTLRNIPVGGGCRKNKR) adopts a Dof-type zinc-finger fold. Zn(2+) contacts are provided by Cys57, Cys60, Cys82, and Cys85. Residues 104–127 (CRKNKRSTSSAARSLRTTPEPASH) are disordered. Residues 110 to 121 (STSSAARSLRTT) show a composition bias toward low complexity.

As to expression, the PEAR proteins (e.g. DOF2.4, DOF5.1, DOF3.2, DOF1.1, DOF5.6 and DOF5.3) form a short-range concentration gradient that peaks at protophloem sieve elements (PSE). Accumulates in the stele.

It localises to the nucleus. Transcription factor that binds specifically to a 5'-AA[AG]G-3' consensus core sequence. The PEAR proteins (e.g. DOF2.4, DOF5.1, DOF3.2, DOF1.1, DOF5.6 and DOF5.3) activate gene expression that promotes radial growth of protophloem sieve elements. This Arabidopsis thaliana (Mouse-ear cress) protein is Dof zinc finger protein DOF5.3.